We begin with the raw amino-acid sequence, 250 residues long: Agamous-like MADS-box protein AGL9 homolog (250 aa).

One can recognise an MADS-box domain in the interval arginine 3–phenylalanine 57. One can recognise a K-box domain in the interval threonine 87–alanine 177.

Expressed in petals and weakly in sepals but not in the column (gynostemium).

It is found in the nucleus. Its function is as follows. Probable transcription factor active in inflorescence development and floral organogenesis. This chain is Agamous-like MADS-box protein AGL9 homolog, found in Aranda deborah (Orchid).